The primary structure comprises 241 residues: DnaA regulatory inactivator Hda (241 aa).

Belongs to the DnaA family. HdA subfamily. In terms of assembly, the active form seems to be an ADP-bound monomer. Forms the RIDA complex (regulatory inactivation of DnaA) of ATP-DnaA, ADP-Hda and the DNA-loaded beta sliding clamp (dnaN).

Mediates the interaction of DNA replication initiator protein DnaA with DNA polymerase subunit beta sliding clamp (dnaN). Stimulates hydrolysis of ATP-DnaA to ADP-DnaA, rendering DnaA inactive for reinitiation, a process called regulatory inhibition of DnaA or RIDA. In Salmonella paratyphi A (strain ATCC 9150 / SARB42), this protein is DnaA regulatory inactivator Hda.